Consider the following 167-residue polypeptide: NADH-quinone oxidoreductase subunit B (167 aa).

Residues Cys-40, Cys-41, Cys-105, and Cys-135 each contribute to the [4Fe-4S] cluster site.

It belongs to the complex I 20 kDa subunit family. As to quaternary structure, NDH-1 is composed of 14 different subunits. Subunits NuoB, C, D, E, F, and G constitute the peripheral sector of the complex. It depends on [4Fe-4S] cluster as a cofactor.

It localises to the cell inner membrane. The enzyme catalyses a quinone + NADH + 5 H(+)(in) = a quinol + NAD(+) + 4 H(+)(out). In terms of biological role, NDH-1 shuttles electrons from NADH, via FMN and iron-sulfur (Fe-S) centers, to quinones in the respiratory chain. The immediate electron acceptor for the enzyme in this species is believed to be ubiquinone. Couples the redox reaction to proton translocation (for every two electrons transferred, four hydrogen ions are translocated across the cytoplasmic membrane), and thus conserves the redox energy in a proton gradient. The sequence is that of NADH-quinone oxidoreductase subunit B from Magnetococcus marinus (strain ATCC BAA-1437 / JCM 17883 / MC-1).